Reading from the N-terminus, the 149-residue chain is Glutamyl-tRNA(Gln) amidotransferase subunit C, mitochondrial (149 aa).

The protein belongs to the GatC family. Subunit of the heterotrimeric GatCAB amidotransferase (AdT) complex, composed of A, B and C subunits.

It localises to the mitochondrion. It carries out the reaction L-glutamyl-tRNA(Gln) + L-glutamine + ATP + H2O = L-glutaminyl-tRNA(Gln) + L-glutamate + ADP + phosphate + H(+). Allows the formation of correctly charged Gln-tRNA(Gln) through the transamidation of misacylated Glu-tRNA(Gln) in the mitochondria. The reaction takes place in the presence of glutamine and ATP through an activated gamma-phospho-Glu-tRNA(Gln). This Trichoplax adhaerens (Trichoplax reptans) protein is Glutamyl-tRNA(Gln) amidotransferase subunit C, mitochondrial.